Reading from the N-terminus, the 509-residue chain is uncharacterized protein (509 aa).

4 disordered regions span residues 112 to 131, 152 to 325, 365 to 457, and 488 to 509; these read KSKQ…SENE, NKNT…NNDS, NNIN…PNQG, and AQQP…VQQQ. Low complexity-rich tracts occupy residues 116–127 and 153–184; these read NNNGFNGHKGNF and KNTI…SNTT. Over residues 189–217 the composition is skewed to acidic residues; that stretch reads YSDDDYQNEQNEFEEEDYDSNDDENDSHD. A compositionally biased stretch (polar residues) spans 228-242; the sequence is KTTNQLKRKVSSSFT. Composition is skewed to low complexity over residues 243–325 and 365–397; these read NNNY…NNDS and NNIN…TNND. Polar residues predominate over residues 398–422; sequence LKSSNHSNYDFNYNTNERLSHSPIQ. Low complexity predominate over residues 423–442; sequence THSSSNNSTPSNQSPTFPSN. Polar residues-rich tracts occupy residues 443–457 and 496–509; these read YISQ…PNQG and NNNV…VQQQ.

This is an uncharacterized protein from Dictyostelium discoideum (Social amoeba).